Reading from the N-terminus, the 473-residue chain is uncharacterized protein (473 aa).

An N-terminal signal peptide occupies residues M1 to G19.

This is an uncharacterized protein from Methanocaldococcus jannaschii (strain ATCC 43067 / DSM 2661 / JAL-1 / JCM 10045 / NBRC 100440) (Methanococcus jannaschii).